A 1031-amino-acid polypeptide reads, in one-letter code: Receptor-like protein EIX1 (1031 aa).

The signal sequence occupies residues 1–29; it reads MDKWKYARLAQFLFTLSLLFLETSFGLGG. Residue Asn30 is glycosylated (N-linked (GlcNAc...) asparagine). Residues 30–113 are N-cap; sequence NKTLCLDKER…PRLTGKLSPS (84 aa). The Extracellular segment spans residues 30-971; it reads NKTLCLDKER…DEEEEFPSLE (942 aa). The stretch at 117–140 is one LRR 1 repeat; that stretch reads LEYLNYLDLSVNEFERSEIPRFIG. The LRR 2; degenerate repeat unit spans residues 142-165; sequence LKRLEYLNLSASFFSGVIPIQFQN. Residues Asn149 and Asn165 are each glycosylated (N-linked (GlcNAc...) asparagine). 4 LRR repeats span residues 166-189, 191-215, 216-240, and 243-266; these read LTSL…WLSH, SSLE…ITKV, PSLK…DLAN, and LISL…SWVF. Residue Asn240 is glycosylated (N-linked (GlcNAc...) asparagine). Asn267 is a glycosylation site (N-linked (GlcNAc...) asparagine). LRR repeat units follow at residues 269 to 292, 293 to 317, 318 to 341, 346 to 369, 370 to 393, 394 to 416, 417 to 440, 441 to 463, 465 to 487, 488 to 509, 512 to 536, 538 to 559, 561 to 584, and 586 to 611; these read TTSL…RFGT, LMYL…SFGN, LTRL…LFLR, RKSL…ATRF, SSLK…AGQV, STLE…LALF, PSLR…IGKL, SQLR…MGQL, NLES…HLSN, LSSL…SFNW, PFQL…LQNQ, NYTV…WFSS, PPDL…LIEN, and YGYR…NVQI. Residue Asn317 is glycosylated (N-linked (GlcNAc...) asparagine). N-linked (GlcNAc...) asparagine glycans are attached at residues Asn365 and Asn383. Asn487 is a glycosylation site (N-linked (GlcNAc...) asparagine). Residues Asn538, Asn568, and Asn597 are each glycosylated (N-linked (GlcNAc...) asparagine). One copy of the LRR 21; degenerate repeat lies at 612–629; sequence FYLHKNQFFGSISSICRS. 6 LRR repeats span residues 630 to 654, 655 to 678, 679 to 703, 705 to 725, 726 to 750, and 752 to 773; these read RTSP…WMNM, TSLA…LGSL, TNLK…QCQG, QILD…IGTD, LLNL…ICQL, and FLQI…CFNN. N-linked (GlcNAc...) asparagine glycans are attached at residues Asn653 and Asn666. Asn773 and Asn781 each carry an N-linked (GlcNAc...) asparagine glycan. 4 LRR repeats span residues 823–847, 848–871, 872–895, and 896–918; these read LLYL…IADM, RGLK…IGQM, RMLE…LANL, and TFLS…STQL. 3 N-linked (GlcNAc...) asparagine glycosylation sites follow: Asn854, Asn861, and Asn894. A C-cap/acidic domain region spans residues 919-971; that stretch reads QSFDRSSYSDNAQLCGPPLQECPGYAPPSPLIDHGSNNNPQEHDEEEEFPSLE. The chain crosses the membrane as a helical span at residues 972–992; sequence FYISMVLSFFVAFWGILGCLI. Topologically, residues 993–1031 are cytoplasmic; the sequence is VNSSWRNAYFKFLTDTTSWLDMISRVWFARLKKKLRRAR.

Belongs to the RLP family. Interacts with EIX elicitor protein.

The protein localises to the cell membrane. Functionally, involved in plant defense. Confers resistance to the fungal pathogen T.viride through recognition of the EIX elicitor protein. The protein is Receptor-like protein EIX1 of Solanum lycopersicum (Tomato).